A 134-amino-acid chain; its full sequence is Arsenate reductase (134 aa).

Active-site nucleophile residues include Cys11, Cys83, and Cys90. Intrachain disulfides connect Cys11-Cys83 and Cys83-Cys90.

This sequence belongs to the low molecular weight phosphotyrosine protein phosphatase family. Thioredoxin-coupled ArsC subfamily.

It localises to the cytoplasm. The catalysed reaction is arsenate + [thioredoxin]-dithiol + H(+) = arsenite + [thioredoxin]-disulfide + H2O. Its function is as follows. Catalyzes the reduction of arsenate [As(V)] to arsenite [As(III)]. This chain is Arsenate reductase, found in Bacillus cereus (strain G9842).